The sequence spans 466 residues: mRNA-capping enzyme subunit alpha (466 aa).

Lys67 functions as the N6-GMP-lysine intermediate in the catalytic mechanism. Positions 408-466 (REQGLKNAQKQFNHQASARSSLSQQHSTEPEQSQDQPKYVDDDDDNWSDDEPDTKRQKI) are disordered. Over residues 413–443 (KNAQKQFNHQASARSSLSQQHSTEPEQSQDQ) the composition is skewed to polar residues. Positions 448–459 (DDDDDNWSDDEP) are enriched in acidic residues.

It belongs to the eukaryotic GTase family. As to quaternary structure, heterodimer. The mRNA-capping enzyme is composed of two separate chains alpha and beta, respectively a mRNA guanylyltransferase and an mRNA 5'-triphosphate monophosphatase.

Its subcellular location is the nucleus. It carries out the reaction a 5'-end diphospho-ribonucleoside in mRNA + GTP + H(+) = a 5'-end (5'-triphosphoguanosine)-ribonucleoside in mRNA + diphosphate. Its function is as follows. Second step of mRNA capping. Transfer of the GMP moiety of GTP to the 5'-end of RNA via an enzyme-GMP covalent reaction intermediate. In Kluyveromyces lactis (strain ATCC 8585 / CBS 2359 / DSM 70799 / NBRC 1267 / NRRL Y-1140 / WM37) (Yeast), this protein is mRNA-capping enzyme subunit alpha (CEG1).